The primary structure comprises 610 residues: ATP-dependent zinc metalloprotease FtsH (610 aa).

At 1-3 the chain is on the cytoplasmic side; sequence MAK. Residues 4-24 form a helical membrane-spanning segment; sequence NLMLWLVIAVVLMSIFQNFSA. Over 25–97 the chain is Extracellular; that stretch reads NNINNRKIDY…IIGAAPEEQS (73 aa). The chain crosses the membrane as a helical span at residues 98–118; it reads FFTAIFISWFPMLLLIGVWVF. Topologically, residues 119 to 610 are cytoplasmic; it reads FMRQMQVGGG…SNICTDDDNN (492 aa). 192–199 lines the ATP pocket; the sequence is GPPGTGKT. His414 provides a ligand contact to Zn(2+). Glu415 is a catalytic residue. His418 and Asp492 together coordinate Zn(2+).

It in the central section; belongs to the AAA ATPase family. The protein in the C-terminal section; belongs to the peptidase M41 family. Homohexamer. The cofactor is Zn(2+).

It is found in the cell membrane. Acts as a processive, ATP-dependent zinc metallopeptidase for both cytoplasmic and membrane proteins. Plays a role in the quality control of integral membrane proteins. This is ATP-dependent zinc metalloprotease FtsH from Buchnera aphidicola subsp. Baizongia pistaciae (strain Bp).